A 385-amino-acid polypeptide reads, in one-letter code: cAMP-dependent protein kinase regulatory subunit (385 aa).

Over residues 1–22 the composition is skewed to polar residues; that stretch reads MSSTGFTSPFGNANPFGSSGRS. 2 disordered regions span residues 1-51 and 77-111; these read MSST…GVKN and DFPAHYNLGRRTSVSAESLKPVTDNSDNWSPPVHP. Residues 1–128 form a dimerization and phosphorylation region; sequence MSSTGFTSPF…RLKKAISGNF (128 aa). Serine 89 carries the post-translational modification Phosphoserine. Residues 129-260, glutamate 207, arginine 216, 261-378, glutamate 328, and arginine 337 contribute to the 3',5'-cyclic AMP site; these read LFNH…EEVP and ILKT…EAEE.

Belongs to the cAMP-dependent kinase regulatory chain family. In terms of assembly, tetramer, composed of 2 regulatory (R) and 2 catalytic (C) subunits. In the presence of cAMP it dissociates into 2 active monomeric C subunits and an R dimer.

The chain is cAMP-dependent protein kinase regulatory subunit (mcb) from Neurospora crassa (strain ATCC 24698 / 74-OR23-1A / CBS 708.71 / DSM 1257 / FGSC 987).